A 579-amino-acid chain; its full sequence is Arginine--tRNA ligase (579 aa).

Residues 123–133 (PNLAKEMHVGH) carry the 'HIGH' region motif.

Belongs to the class-I aminoacyl-tRNA synthetase family. Monomer.

It is found in the cytoplasm. The enzyme catalyses tRNA(Arg) + L-arginine + ATP = L-arginyl-tRNA(Arg) + AMP + diphosphate. This is Arginine--tRNA ligase from Saccharophagus degradans (strain 2-40 / ATCC 43961 / DSM 17024).